Consider the following 283-residue polypeptide: Elongation factor Ts (283 aa).

The involved in Mg(2+) ion dislocation from EF-Tu stretch occupies residues 80-83 (TDFV).

Belongs to the EF-Ts family.

It localises to the cytoplasm. Functionally, associates with the EF-Tu.GDP complex and induces the exchange of GDP to GTP. It remains bound to the aminoacyl-tRNA.EF-Tu.GTP complex up to the GTP hydrolysis stage on the ribosome. In Enterobacter sp. (strain 638), this protein is Elongation factor Ts.